Here is a 176-residue protein sequence, read N- to C-terminus: NAD(P)H-quinone oxidoreductase subunit J (176 aa).

The protein belongs to the complex I 30 kDa subunit family. In terms of assembly, NDH-1 can be composed of about 15 different subunits; different subcomplexes with different compositions have been identified which probably have different functions.

Its subcellular location is the cellular thylakoid membrane. The enzyme catalyses a plastoquinone + NADH + (n+1) H(+)(in) = a plastoquinol + NAD(+) + n H(+)(out). The catalysed reaction is a plastoquinone + NADPH + (n+1) H(+)(in) = a plastoquinol + NADP(+) + n H(+)(out). NDH-1 shuttles electrons from an unknown electron donor, via FMN and iron-sulfur (Fe-S) centers, to quinones in the respiratory and/or the photosynthetic chain. The immediate electron acceptor for the enzyme in this species is believed to be plastoquinone. Couples the redox reaction to proton translocation, and thus conserves the redox energy in a proton gradient. Cyanobacterial NDH-1 also plays a role in inorganic carbon-concentration. This Prochlorococcus marinus (strain MIT 9515) protein is NAD(P)H-quinone oxidoreductase subunit J.